The chain runs to 121 residues: Protransforming growth factor alpha (121 aa).

A signal peptide is located at residue L1. A propeptide spans 2–16 (removed in mature form); sequence ENSTSLLSDPPVAAA. At 2-75 the chain is on the extracellular side; sequence ENSTSLLSDP…AVVAASQKKQ (74 aa). N-linked (GlcNAc...) asparagine glycosylation is present at N3. One can recognise an EGF-like domain in the interval 20 to 60; that stretch reads HFNDCPDSHTQFCFHGTCRFLVQEDRPACVCHSGYVGARCE. 3 cysteine pairs are disulfide-bonded: C24–C37, C32–C48, and C50–C59. The propeptide at 67-121 is removed in mature form; that stretch reads VVAASQKKQAITALVVVSIVALAVLIITCVLIHCCQVRKHCEWCRALICRHEKPS. Residues 76 to 101 traverse the membrane as a helical segment; the sequence is AITALVVVSIVALAVLIITCVLIHCC.

As to quaternary structure, interacts with the PDZ domains of MAGI3, SDCBP and SNTA1. The interaction with SDCBP, is required for the targeting to the cell surface. In the endoplasmic reticulum, in its immature form (i.e. with a prosegment and lacking full N-glycosylation), interacts with CNIH. In the Golgi apparatus, may form a complex with CNIH and GORASP2. Interacts (via cytoplasmic C-terminal domain) with NKD2. Hypothalamus.

It localises to the secreted. It is found in the extracellular space. The protein localises to the cell membrane. Functionally, TGF alpha is a mitogenic polypeptide that is able to bind to the EGF receptor/EGFR and to act synergistically with TGF beta to promote anchorage-independent cell proliferation in soft agar. This is Protransforming growth factor alpha (TGFA) from Macaca mulatta (Rhesus macaque).